Reading from the N-terminus, the 542-residue chain is Thermosome subunit (542 aa).

This sequence belongs to the TCP-1 chaperonin family. As to quaternary structure, forms an oligomeric complex of eight-membered rings.

Molecular chaperone; binds unfolded polypeptides in vitro, and has a weak ATPase activity. The polypeptide is Thermosome subunit (ths) (Methanocaldococcus jannaschii (strain ATCC 43067 / DSM 2661 / JAL-1 / JCM 10045 / NBRC 100440) (Methanococcus jannaschii)).